The primary structure comprises 76 residues: Conotoxin Cal29b (76 aa).

The N-terminal stretch at 1-43 (MKLTCVLIVAVLILAACQFTAANMARYGKTQIARSDVKSIDAR) is a signal peptide.

The protein belongs to the conotoxin O1 superfamily. May contain 4 disulfide bonds. As to expression, expressed by the venom duct.

It is found in the secreted. In terms of biological role, is able to inhibit the growth of Mycobacterium tuberculosis (MIC=0.22-3.52 uM against strain H37Rv and 2 multidrug-resistant strains). May also show neurotoxic activity. The protein is Conotoxin Cal29b of Californiconus californicus (California cone).